Here is a 217-residue protein sequence, read N- to C-terminus: Glutathione S-transferase 1 (217 aa).

Positions M1–D83 constitute a GST N-terminal domain. Residues S11, H53 to V55, and D67 to H69 contribute to the glutathione site. In terms of domain architecture, GST C-terminal spans D89–L211.

Belongs to the GST superfamily. Theta family. Homodimer.

It catalyses the reaction RX + glutathione = an S-substituted glutathione + a halide anion + H(+). Its function is as follows. Conjugation of reduced glutathione to a wide number of exogenous and endogenous hydrophobic electrophiles. This Manduca sexta (Tobacco hawkmoth) protein is Glutathione S-transferase 1 (GST1).